The primary structure comprises 359 residues: Holliday junction branch migration complex subunit RuvB (359 aa).

A large ATPase domain (RuvB-L) region spans residues 1 to 187 (MSGLEHGDAS…FGFTAHLEFY (187 aa)). ATP is bound by residues Leu26, Arg27, Gly68, Lys71, Thr72, Thr73, 134-136 (EDY), Arg177, Tyr187, and Arg224. Thr72 serves as a coordination point for Mg(2+). Residues 188 to 257 (ETHELEQVIE…SVRAALDLYD (70 aa)) are small ATPAse domain (RuvB-S). The tract at residues 260 to 359 (PLGLDRLDRA…VAGALFGDEL (100 aa)) is head domain (RuvB-H). DNA contacts are provided by Arg315 and Arg320.

This sequence belongs to the RuvB family. Homohexamer. Forms an RuvA(8)-RuvB(12)-Holliday junction (HJ) complex. HJ DNA is sandwiched between 2 RuvA tetramers; dsDNA enters through RuvA and exits via RuvB. An RuvB hexamer assembles on each DNA strand where it exits the tetramer. Each RuvB hexamer is contacted by two RuvA subunits (via domain III) on 2 adjacent RuvB subunits; this complex drives branch migration. In the full resolvosome a probable DNA-RuvA(4)-RuvB(12)-RuvC(2) complex forms which resolves the HJ.

The protein localises to the cytoplasm. The enzyme catalyses ATP + H2O = ADP + phosphate + H(+). Functionally, the RuvA-RuvB-RuvC complex processes Holliday junction (HJ) DNA during genetic recombination and DNA repair, while the RuvA-RuvB complex plays an important role in the rescue of blocked DNA replication forks via replication fork reversal (RFR). RuvA specifically binds to HJ cruciform DNA, conferring on it an open structure. The RuvB hexamer acts as an ATP-dependent pump, pulling dsDNA into and through the RuvAB complex. RuvB forms 2 homohexamers on either side of HJ DNA bound by 1 or 2 RuvA tetramers; 4 subunits per hexamer contact DNA at a time. Coordinated motions by a converter formed by DNA-disengaged RuvB subunits stimulates ATP hydrolysis and nucleotide exchange. Immobilization of the converter enables RuvB to convert the ATP-contained energy into a lever motion, pulling 2 nucleotides of DNA out of the RuvA tetramer per ATP hydrolyzed, thus driving DNA branch migration. The RuvB motors rotate together with the DNA substrate, which together with the progressing nucleotide cycle form the mechanistic basis for DNA recombination by continuous HJ branch migration. Branch migration allows RuvC to scan DNA until it finds its consensus sequence, where it cleaves and resolves cruciform DNA. This chain is Holliday junction branch migration complex subunit RuvB, found in Clavibacter michiganensis subsp. michiganensis (strain NCPPB 382).